Here is a 957-residue protein sequence, read N- to C-terminus: MNYRQLFLLQNVNLESNYLLKRVCLSLKLSPCKLTRKFHHACPSSSKVLKYFRITGCLINFGKQPANDHHLWGHCGARLKHTQSDLIDRFKNANLKSVNEENLKKFFSELENHGNIRQWLKDKFEKDKRAAVCPTTTKSEEEKLENDFEYSFDLEDFSSENFRQYDRGDLLVFYRGSEGIELAACTGTNVWNYSNVLTSINENGTIKEFRTSRVLLRCPNVFKKLKEVQQPLSDVSVPSDVLPFTIKLLKKISQRAQDLSRSHRNEFLRILTEFNIPNKLDNSASFSDLLKFVYKTSKPSPYAKISLLHFLLTESKHFLISDHIFSEIQKVYFLPSSQNDSFDDVVACLRQKSTPYLSFIKKARHLIQVSRDKYKLPISTEEIKPVVYSQVTWTEFEKKLLRYLVQEMIAKSIQSLPNTHLCQVYKEVGLQTHERGLTSDQFAKFLTDIGVWASWQPPRLFQQEYSIAGLGTNPQLDAVYERECNHFKKFVKNELKDSLESQRVDLRHLKAFAFDSSSTKEIDDAISVEELGMSNSWLHIHVANPTSTVDIRSPLGTFAERNFQTIYHPNKIVYMLPLNITQKYWSLDSSSTAQRALTFSAKISKNGDILDYKVRPSFISSVIKYTPQQLDKALHSNRSIAKDIVSGPVDEETKGVSNDHMKDILRIYELSKQACFSRLQKFAFVIAQPTPTVELLPNNVPYNLGDLNHPVYWSSFPTISLNVSEGYSLAESVISECMILAGRVSSLFFQEHKLPGIFRGQPYPIMDGVRRKAFETLLSNRSSWGLVETKYSLSVMPLFESSHLASTPVSHFSLGLKDGYIQSTSPLRRFTDFFTHHQIQSVLLKTPKNTIPDGILRGKLNLYNQKEKSIKTIGRYINRFWALKYIERLPKVQKNIYHGYLMVSELSTPQVMLEELGVKAHIDILPDEAFRLANTRQAFTIKDVFPESNILLVALAT.

Residues methionine 1 to isoleucine 54 constitute a mitochondrion transit peptide. Residues arginine 503 to leucine 843 enclose the RNB domain.

This sequence belongs to the RNR ribonuclease family.

The protein localises to the mitochondrion. The catalysed reaction is Exonucleolytic cleavage in the 3'- to 5'-direction to yield nucleoside 5'-phosphates.. Its function is as follows. Required for intron-independent turnover and processing of mitochondrial RNA. Participates in 3'-mtRNA processing where it hydrolyzes single-stranded RNA or partially double-stranded RNA with 3'-single-stranded tails. In Schizosaccharomyces pombe (strain 972 / ATCC 24843) (Fission yeast), this protein is Exoribonuclease II, mitochondrial (rpm1).